Consider the following 50-residue polypeptide: Large ribosomal subunit protein bL33 (50 aa).

Belongs to the bacterial ribosomal protein bL33 family.

This is Large ribosomal subunit protein bL33 from Solibacter usitatus (strain Ellin6076).